Reading from the N-terminus, the 351-residue chain is MHSPSSTSFTWILITLGCLAFYASLSDAQLTPTFYDTSCPNVSNIVRDIIINELRSDPRITASILRLHFHDCFVNGCDASILLDNTTSFLTEKDALGNANSARGFPTVDRIKAAVERACPRTVSCADVLTIAAQQSVNLAGGPSWRVPLGRRDSLQAFLDLANANLPAPFFTLPQLKDAFAKVGLDRPSDLVALSGGHTFGKNQCRFIMDRLYNFSNTGLPDPTLNTTYLQTLRQQCPLNGNQSVLVDFDLRTPTVFDNKYYVNLKEQKGLIQSDQELFSSPNATDTIPLVRSFADGTQKFFNAFVEAMNRMGNITPLTGTQGEIRLNCRVVNSNSLLHDIVEVVDFVSSM.

An N-terminal signal peptide occupies residues 1-28 (MHSPSSTSFTWILITLGCLAFYASLSDA). Disulfide bonds link cysteine 39-cysteine 119, cysteine 72-cysteine 77, cysteine 125-cysteine 329, and cysteine 205-cysteine 237. Residue asparagine 41 is glycosylated (N-linked (GlcNAc...) asparagine). The active-site Proton acceptor is histidine 70. 5 residues coordinate Ca(2+): aspartate 71, valine 74, glycine 76, aspartate 78, and serine 80. The N-linked (GlcNAc...) asparagine glycan is linked to asparagine 85. Proline 167 contributes to the substrate binding site. Histidine 198 is a binding site for heme b. Position 199 (threonine 199) interacts with Ca(2+). N-linked (GlcNAc...) asparagine glycans are attached at residues asparagine 214, asparagine 226, and asparagine 242. Residues aspartate 250, threonine 253, and aspartate 258 each contribute to the Ca(2+) site. Asparagine 283 is a glycosylation site (N-linked (GlcNAc...) asparagine).

Belongs to the peroxidase family. Classical plant (class III) peroxidase subfamily. The cofactor is Ca(2+). Requires heme b as cofactor.

The protein resides in the secreted. Its subcellular location is the vacuole. It carries out the reaction 2 a phenolic donor + H2O2 = 2 a phenolic radical donor + 2 H2O. Removal of H(2)O(2), oxidation of toxic reductants, biosynthesis and degradation of lignin, suberization, auxin catabolism, response to environmental stresses such as wounding, pathogen attack and oxidative stress. These functions might be dependent on each isozyme/isoform in each plant tissue. This chain is Peroxidase C1B (PRXC1B), found in Armoracia rusticana (Horseradish).